The chain runs to 426 residues: Enolase (426 aa).

Q163 serves as a coordination point for (2R)-2-phosphoglycerate. The active-site Proton donor is the E205. Mg(2+) is bound by residues D242, E286, and D313. The (2R)-2-phosphoglycerate site is built by K338, R367, S368, and K389. K338 functions as the Proton acceptor in the catalytic mechanism.

This sequence belongs to the enolase family. The cofactor is Mg(2+).

It is found in the cytoplasm. Its subcellular location is the secreted. The protein localises to the cell surface. The enzyme catalyses (2R)-2-phosphoglycerate = phosphoenolpyruvate + H2O. The protein operates within carbohydrate degradation; glycolysis; pyruvate from D-glyceraldehyde 3-phosphate: step 4/5. Catalyzes the reversible conversion of 2-phosphoglycerate (2-PG) into phosphoenolpyruvate (PEP). It is essential for the degradation of carbohydrates via glycolysis. In Syntrophobacter fumaroxidans (strain DSM 10017 / MPOB), this protein is Enolase.